A 2168-amino-acid chain; its full sequence is Bromodomain adjacent to zinc finger domain protein 2B (2168 aa).

Disordered stretches follow at residues 1 to 29, 140 to 348, 409 to 428, 459 to 479, 528 to 698, 719 to 740, 841 to 872, and 1021 to 1043; these read MESG…ASVV, FAPP…KQPQ, LKAG…SELR, SNPK…ENNH, STPF…LHIA, GTSS…RRVT, MEGR…PPNV, and RKKA…LNKE. Positions 8–29 are enriched in low complexity; the sequence is PSSAASSTTPTSSSTPSVASVV. 2 stretches are compositionally biased toward polar residues: residues 146–163 and 171–193; these read NHDS…SNRN and GSIN…STTA. Composition is skewed to low complexity over residues 194–204 and 240–263; these read SSSMGQTKSTS and ESSS…ISSS. The segment covering 264–291 has biased composition (acidic residues); that stretch reads DSDDLEEDEEEEDQSIEESEDDDSDSES. A compositionally biased stretch (basic and acidic residues) spans 307–325; that stretch reads SDPKADGQKATEKAQEKRI. Positions 335–348 are enriched in low complexity; that stretch reads SQTHSFQSQQKQPQ. Composition is skewed to polar residues over residues 461–479 and 528–551; these read PKAT…ENNH and STPF…QTPV. The span at 592–605 shows a compositional bias: basic and acidic residues; it reads RGTDSDIPSSKDSE. A compositionally biased stretch (acidic residues) spans 606-663; that stretch reads DSNEDEEEDDEEEDEEDDEDDESDDSQSESDSNSESDTEGSEEEDDDDKDQDESDSDT. The segment covering 670–693 has biased composition (polar residues); that stretch reads MKLNKTTSSVKSPSMSLTGHSTPR. Residues 720-732 are compositionally biased toward low complexity; sequence TSSSTLTSSPHSG. Residues 739 to 810 form the MBD domain; the sequence is VTDERELRIP…DNFSFSAKIR (72 aa). Basic and acidic residues predominate over residues 841–861; sequence MEGRRGRPPNPDRQRAREESR. Residues 883-1061 are a coiled coil; the sequence is AKLLRKLQAQ…ELEMAKELKK (179 aa). The DDT domain occupies 1087–1152; sequence GSTFSDCLMV…LSAAVCDPGL (66 aa). Residues 1265–1341 form a disordered region; that stretch reads KRDTSGGIDL…CEDEDEGDQA (77 aa). Residues 1297 to 1321 show a composition bias toward acidic residues; it reads SDYDDDDDDDSDDQGDEDDEDEEDK. Residues 1322–1331 show a composition bias toward basic and acidic residues; sequence EDKKGKKTDI. Residues 1334 to 1375 adopt a coiled-coil conformation; the sequence is DEDEGDQAASVEELEKQIEKLSKQQSQYRRKLFDASHSLRSV. Lysine 1425 is covalently cross-linked (Glycyl lysine isopeptide (Lys-Gly) (interchain with G-Cter in SUMO2)). Lysine 1462 carries the N6-acetyllysine modification. Phosphoserine occurs at positions 1465 and 1467. A compositionally biased stretch (polar residues) spans 1503–1533; the sequence is SGKHSLGSVQSTATQSNVEKADSNNLFNTGS. Disordered regions lie at residues 1503–1542, 1582–1607, and 1670–1694; these read SGKH…FYSP, SLVT…SSAQ, and TSNV…AQPA. Positions 1588-1600 are enriched in pro residues; that stretch reads SQPPSKSPSPTPA. Residues 1670-1692 show a composition bias toward polar residues; it reads TSNVASSKSESPVPQNEKATSAQ. At serine 1680 the chain carries Phosphoserine. Residues 1931-1981 form a PHD-type zinc finger; sequence KVYCQICRKGDNEELLLLCDGCDKGCHTYCHRPKITTIPDGDWFCPACIAK. The tract at residues 1998–2040 is disordered; the sequence is KTNESKKGKKVTLTGDTEDEDSASTSSSLKRGNKDLKKRKMEE. Threonine 2014 is subject to Phosphothreonine. Serine 2019 carries the phosphoserine modification. A compositionally biased stretch (basic and acidic residues) spans 2029–2040; that stretch reads GNKDLKKRKMEE. The Bromo domain maps to 2060–2164; it reads RDDSKDLALC…KYFEKKWTDT (105 aa).

Belongs to the WAL family. Component of the BRF-1 ISWI chromatin remodeling complex, at least composed of SMARCA1 and BAZ2B, which regulates the spacing of histone octamers on the DNA template to facilitate access to DNA. Within the BRF-1 ISWI chromatin remodeling complex interacts with SMARCA1; the interaction is direct. Component of the BRF-5 ISWI chromatin remodeling complex, at least composed of SMARCA5/SNF2H and BAZ2B, which regulates the spacing of histone octamers on the DNA template to facilitate access to DNA. Within the BRF-5 ISWI chromatin remodeling complex interacts with SMARCA5/SNF2H; the interaction is direct. Interacts with acetylated lysine residues on histone H1.4, H2A, H2B, H3 and H4 (in vitro). Interacts with EHMT1. As to expression, expressed at varying levels in several tissues, whereas a smaller transcript was expressed specifically in testis.

It localises to the nucleus. Regulatory subunit of the ATP-dependent BRF-1 and BRF-5 ISWI chromatin remodeling complexes, which form ordered nucleosome arrays on chromatin and facilitate access to DNA during DNA-templated processes such as DNA replication, transcription, and repair. Both complexes regulate the spacing of nucleosomes along the chromatin and have the ability to slide mononucleosomes to the center of a DNA template. The BRF-1 ISWI chromatin remodeling complex has a lower ATP hydrolysis rate than the BRF-5 ISWI chromatin remodeling complex. Chromatin reader protein, which may play a role in transcriptional regulation via interaction with ISWI. Involved in positively modulating the rate of age-related behavioral deterioration. Represses the expression of mitochondrial function-related genes, perhaps by occupying their promoter regions, working in concert with histone methyltransferase EHMT1. The polypeptide is Bromodomain adjacent to zinc finger domain protein 2B (BAZ2B) (Homo sapiens (Human)).